We begin with the raw amino-acid sequence, 439 residues long: Glucose-1-phosphate adenylyltransferase (439 aa).

Residues Tyr122, Gly187, 202–203 (EK), and Ser220 contribute to the alpha-D-glucose 1-phosphate site.

Belongs to the bacterial/plant glucose-1-phosphate adenylyltransferase family. Homotetramer.

It catalyses the reaction alpha-D-glucose 1-phosphate + ATP + H(+) = ADP-alpha-D-glucose + diphosphate. It participates in glycan biosynthesis; glycogen biosynthesis. In terms of biological role, involved in the biosynthesis of ADP-glucose, a building block required for the elongation reactions to produce glycogen. Catalyzes the reaction between ATP and alpha-D-glucose 1-phosphate (G1P) to produce pyrophosphate and ADP-Glc. The protein is Glucose-1-phosphate adenylyltransferase of Thiobacillus denitrificans (strain ATCC 25259 / T1).